Reading from the N-terminus, the 360-residue chain is Peptide chain release factor 1 (360 aa).

Q235 carries the post-translational modification N5-methylglutamine. The tract at residues 284-313 (AKRQQAEASTRRNLLGSGDRSDRNRTYNFP) is disordered.

Belongs to the prokaryotic/mitochondrial release factor family. Post-translationally, methylated by PrmC. Methylation increases the termination efficiency of RF1.

The protein resides in the cytoplasm. In terms of biological role, peptide chain release factor 1 directs the termination of translation in response to the peptide chain termination codons UAG and UAA. The chain is Peptide chain release factor 1 from Salmonella schwarzengrund (strain CVM19633).